Consider the following 142-residue polypeptide: MKTFTAKPETVKREWFVVDAAGQTLGRLATEIASRLRGKHKPEYTPHVDTGDYIVVINAEQVRVTGAKSSDKMYYSHSGFPGGIKEINFEKLIAKAPERVIETAVKGMLPKNPLGRDMYRKLKVYAGAAHPHTAQQPQELKI.

It belongs to the universal ribosomal protein uL13 family. Part of the 50S ribosomal subunit.

Functionally, this protein is one of the early assembly proteins of the 50S ribosomal subunit, although it is not seen to bind rRNA by itself. It is important during the early stages of 50S assembly. This chain is Large ribosomal subunit protein uL13, found in Pseudomonas entomophila (strain L48).